The chain runs to 176 residues: NAD(P)H-quinone oxidoreductase subunit 6, chloroplastic (176 aa).

The next 5 membrane-spanning stretches (helical) occupy residues 10–30 (FLLV…VLLT), 32–52 (PIYS…FYIP), 61–81 (AQLL…VMFM), 93–115 (WTVG…ITTI), and 152–172 (FFLP…GAIA).

It belongs to the complex I subunit 6 family. NDH is composed of at least 16 different subunits, 5 of which are encoded in the nucleus.

It is found in the plastid. The protein localises to the chloroplast thylakoid membrane. It carries out the reaction a plastoquinone + NADH + (n+1) H(+)(in) = a plastoquinol + NAD(+) + n H(+)(out). The enzyme catalyses a plastoquinone + NADPH + (n+1) H(+)(in) = a plastoquinol + NADP(+) + n H(+)(out). Its function is as follows. NDH shuttles electrons from NAD(P)H:plastoquinone, via FMN and iron-sulfur (Fe-S) centers, to quinones in the photosynthetic chain and possibly in a chloroplast respiratory chain. The immediate electron acceptor for the enzyme in this species is believed to be plastoquinone. Couples the redox reaction to proton translocation, and thus conserves the redox energy in a proton gradient. The protein is NAD(P)H-quinone oxidoreductase subunit 6, chloroplastic (ndhG) of Vitis vinifera (Grape).